The primary structure comprises 357 residues: Protein RecA (357 aa).

67–74 (GPESSGKT) contacts ATP. The interval 334 to 357 (ELKPAAAGNSHDEDELAGEGKEEF) is disordered.

This sequence belongs to the RecA family.

The protein resides in the cytoplasm. Its function is as follows. Can catalyze the hydrolysis of ATP in the presence of single-stranded DNA, the ATP-dependent uptake of single-stranded DNA by duplex DNA, and the ATP-dependent hybridization of homologous single-stranded DNAs. It interacts with LexA causing its activation and leading to its autocatalytic cleavage. The protein is Protein RecA of Pectobacterium atrosepticum (strain SCRI 1043 / ATCC BAA-672) (Erwinia carotovora subsp. atroseptica).